The chain runs to 638 residues: Rik1-associated factor 1 (638 aa).

WD repeat units follow at residues 297–336 (KEYS…CGIF), 486–525 (TTQK…KPLS), 544–583 (EVDA…PFIQ), and 587–626 (EMNS…GNKF).

In terms of assembly, component of the Clr4 methyltransferase complex (ClrC) composed of at least clr4, rik1, pcu4, rbx1, raf1 and raf2. The cullin pcu4, rik1, raf1, raf2 and the ring-box protein rbx1 are components of an E3 ubiquitin ligase, whose activity is essential for heterochromatin assembly. Interacts with nup189.

It localises to the cytoplasm. The protein resides in the nucleus. The protein localises to the chromosome. Its function is as follows. Component of the Clr4 methyltransferase complex (ClrC) which contributes to the establishment of heterochromatin by specifically methylating histone H3 to form H3K9me. ClrC preferentially ubiquitylates H3K14 and ClrC-mediated H3 ubiquitination promotes clr4 methyltransferase activity for the methylation of H3K9. H3K9me represents a specific tag for epigenetic transcriptional repression by recruiting swi6/HP1 to methylated histones which leads to transcriptional silencing within centromeric heterochromatin, telomeric regions and at the silent mating-type loci. Has a role in both mitotic and meiotic chromosome segregation. This Schizosaccharomyces pombe (strain 972 / ATCC 24843) (Fission yeast) protein is Rik1-associated factor 1 (raf1).